Reading from the N-terminus, the 182-residue chain is ATP-dependent protease subunit HslV (182 aa).

Threonine 10 is a catalytic residue. Na(+)-binding residues include alanine 164, cysteine 167, and threonine 170.

The protein belongs to the peptidase T1B family. HslV subfamily. In terms of assembly, a double ring-shaped homohexamer of HslV is capped on each side by a ring-shaped HslU homohexamer. The assembly of the HslU/HslV complex is dependent on binding of ATP.

The protein localises to the cytoplasm. The catalysed reaction is ATP-dependent cleavage of peptide bonds with broad specificity.. Allosterically activated by HslU binding. Protease subunit of a proteasome-like degradation complex believed to be a general protein degrading machinery. This Chelativorans sp. (strain BNC1) protein is ATP-dependent protease subunit HslV.